Consider the following 78-residue polypeptide: DNA-directed RNA polymerase subunit Rpo5 (78 aa).

It belongs to the archaeal Rpo5/eukaryotic RPB5 RNA polymerase subunit family. In terms of assembly, part of the RNA polymerase complex.

It localises to the cytoplasm. It catalyses the reaction RNA(n) + a ribonucleoside 5'-triphosphate = RNA(n+1) + diphosphate. Its function is as follows. DNA-dependent RNA polymerase (RNAP) catalyzes the transcription of DNA into RNA using the four ribonucleoside triphosphates as substrates. This Methanosarcina acetivorans (strain ATCC 35395 / DSM 2834 / JCM 12185 / C2A) protein is DNA-directed RNA polymerase subunit Rpo5.